Here is an 80-residue protein sequence, read N- to C-terminus: Large ribosomal subunit protein eL13 (80 aa).

The protein belongs to the eukaryotic ribosomal protein eL13 family.

This chain is Large ribosomal subunit protein eL13, found in Aeropyrum pernix (strain ATCC 700893 / DSM 11879 / JCM 9820 / NBRC 100138 / K1).